A 474-amino-acid chain; its full sequence is PTS system N-acetylmuramic acid-specific EIIBC component (474 aa).

Residues 1–89 (MAKEISSELL…SELLGEAPVQ (89 aa)) enclose the PTS EIIB type-1 domain. Residues 1–123 (MAKEISSELL…LAKFATIFTP (123 aa)) are Cytoplasmic-facing. Cys-29 serves as the catalytic Phosphocysteine intermediate; for EIIB activity. One can recognise a PTS EIIC type-1 domain in the interval 115–474 (AKFATIFTPL…LFGCRNVNLD (360 aa)). The helical transmembrane segment at 124–144 (LIPGFIAAGLLLGIATLIATV) threads the bilayer. Residues 145–157 (MHVPADAQGTLPD) are Periplasmic-facing. Residues 158-178 (ALNFMKVFSKGLFTFLVILVG) traverse the membrane as a helical segment. Over 179–180 (YN) the chain is Cytoplasmic. The chain crosses the membrane as a helical span at residues 181-201 (AAQAFGGTGVNGAIIAALFLL). The Periplasmic portion of the chain corresponds to 202–217 (GYNPAATTGYYAGFHD). A helical membrane pass occupies residues 218-238 (FFGLPIDPRGNIIGVLIAAWA). The Cytoplasmic portion of the chain corresponds to 239-260 (CARIEGMVRRFMPDDLDMLLTS). The helical transmembrane segment at 261–281 (LITLLITATLAYLIIMPLGGW) threads the bilayer. The Periplasmic portion of the chain corresponds to 282-301 (LFEGMSWLFMHLNSNPFGCA). The chain crosses the membrane as a helical span at residues 302 to 322 (VLAGLFLIAVVFGVHQGFIPV). Residues 323–334 (YLALMDSQGFNS) are Cytoplasmic-facing. A helical transmembrane segment spans residues 335–355 (LFPILSMAGAGQVGAALALYW). The Periplasmic portion of the chain corresponds to 356-368 (RAQPHSALRSQVR). A helical transmembrane segment spans residues 369–389 (GAIIPGLLGVGEPLIYGVTLP). The Cytoplasmic portion of the chain corresponds to 390–393 (RMKP). The helical transmembrane segment at 394–414 (FVTACLGGAAGGLFIGLIAWW) threads the bilayer. Residues 415–440 (GLPMGLNSAFGPSGLVALPLMTSAQG) are Periplasmic-facing. A helical membrane pass occupies residues 441 to 461 (ILPAMAVYAGGILVAWVCGFI). Residues 462 to 474 (FTTLFGCRNVNLD) lie on the Cytoplasmic side of the membrane.

It localises to the cell inner membrane. It catalyses the reaction N-acetyl-beta-D-muramate(out) + N(pros)-phospho-L-histidyl-[protein] = N-acetyl-beta-D-muramate 6-phosphate(in) + L-histidyl-[protein]. In terms of biological role, the phosphoenolpyruvate-dependent sugar phosphotransferase system (sugar PTS), a major carbohydrate active transport system, catalyzes the phosphorylation of incoming sugar substrates concomitantly with their translocation across the cell membrane. This system is involved in N-acetylmuramic acid (MurNAc) transport, yielding cytoplasmic MurNAc-6-P. Is responsible for growth on MurNAc as the sole source of carbon and energy. Is also able to take up anhydro-N-acetylmuramic acid (anhMurNAc), but cannot phosphorylate the carbon 6, probably because of the 1,6-anhydro ring. The chain is PTS system N-acetylmuramic acid-specific EIIBC component (murP) from Escherichia coli (strain K12).